Reading from the N-terminus, the 158-residue chain is Transcription elongation factor GreA (158 aa).

Residues 46-66 (AEYEAAKERQGFIEGRISELE) adopt a coiled-coil conformation.

It belongs to the GreA/GreB family.

Necessary for efficient RNA polymerase transcription elongation past template-encoded arresting sites. The arresting sites in DNA have the property of trapping a certain fraction of elongating RNA polymerases that pass through, resulting in locked ternary complexes. Cleavage of the nascent transcript by cleavage factors such as GreA or GreB allows the resumption of elongation from the new 3'terminus. GreA releases sequences of 2 to 3 nucleotides. The sequence is that of Transcription elongation factor GreA from Neisseria meningitidis serogroup B (strain ATCC BAA-335 / MC58).